A 238-amino-acid polypeptide reads, in one-letter code: Probable transcriptional regulatory protein SAK_1658 (238 aa).

The protein belongs to the TACO1 family. YeeN subfamily.

The protein resides in the cytoplasm. In Streptococcus agalactiae serotype Ia (strain ATCC 27591 / A909 / CDC SS700), this protein is Probable transcriptional regulatory protein SAK_1658.